The primary structure comprises 119 residues: Large ribosomal subunit protein bL20 (119 aa).

Belongs to the bacterial ribosomal protein bL20 family.

Its function is as follows. Binds directly to 23S ribosomal RNA and is necessary for the in vitro assembly process of the 50S ribosomal subunit. It is not involved in the protein synthesizing functions of that subunit. This Vesicomyosocius okutanii subsp. Calyptogena okutanii (strain HA) protein is Large ribosomal subunit protein bL20.